Consider the following 154-residue polypeptide: Ribosomal RNA large subunit methyltransferase H (154 aa).

S-adenosyl-L-methionine contacts are provided by residues L70, G102, and 121-126 (LSRLTF).

Belongs to the RNA methyltransferase RlmH family. Homodimer.

It localises to the cytoplasm. It carries out the reaction pseudouridine(1915) in 23S rRNA + S-adenosyl-L-methionine = N(3)-methylpseudouridine(1915) in 23S rRNA + S-adenosyl-L-homocysteine + H(+). Its function is as follows. Specifically methylates the pseudouridine at position 1915 (m3Psi1915) in 23S rRNA. This Geobacter metallireducens (strain ATCC 53774 / DSM 7210 / GS-15) protein is Ribosomal RNA large subunit methyltransferase H.